The chain runs to 446 residues: Cobalamin biosynthesis protein CbiHC (446 aa).

The segment at 1-246 is cobalt-factor III C(17)-methyltransferase; it reads MLLLPSRGKL…MFTPRGYSNK (246 aa). The tract at residues 247–446 is cobalt-precorrin-8 methylmutase; sequence YNIGEKRRAE…CLIEHADRPD (200 aa).

This sequence in the N-terminal section; belongs to the precorrin methyltransferase family. It in the C-terminal section; belongs to the CobH family.

The enzyme catalyses Co(II)-factor III + S-adenosyl-L-methionine + H(+) = Co(II)-factor IV + S-adenosyl-L-homocysteine. It catalyses the reaction Co-precorrin-8X = cob(II)yrinate. It functions in the pathway cofactor biosynthesis; adenosylcobalamin biosynthesis; cob(II)yrinate a,c-diamide from sirohydrochlorin (anaerobic route): step 3/10. The protein operates within cofactor biosynthesis; adenosylcobalamin biosynthesis; cob(II)yrinate a,c-diamide from sirohydrochlorin (anaerobic route): step 9/10. In terms of biological role, bifunctional enzyme with a methyltransferase domain that catalyzes the ring contraction and methylation of C-17 in cobalt-factor III to form cobalt-factor IV, and an isomerase domain that catalyzes the conversion of cobalt-precorrin-8 to cobyrinate. This is Cobalamin biosynthesis protein CbiHC (cbiHC) from Archaeoglobus fulgidus (strain ATCC 49558 / DSM 4304 / JCM 9628 / NBRC 100126 / VC-16).